The following is a 300-amino-acid chain: Enoyl-CoA hydratase domain-containing protein 3, mitochondrial (300 aa).

The transit peptide at 1–66 (MAVVAGLRAF…RNIVLSNPRR (66 aa)) directs the protein to the mitochondrion. Positions 34–53 (GSAGPAGSESEPRLTSTRQQ) are disordered. Lysine 110 is subject to N6-succinyllysine.

Belongs to the enoyl-CoA hydratase/isomerase family.

It is found in the mitochondrion. May play a role in fatty acid biosynthesis and insulin sensitivity. The chain is Enoyl-CoA hydratase domain-containing protein 3, mitochondrial from Mus musculus (Mouse).